The sequence spans 735 residues: Cyclic nucleotide-gated channel cone photoreceptor subunit alpha (735 aa).

The Cytoplasmic segment spans residues 1-214; sequence MAKINTQHSY…PSSNMYYNWL (214 aa). Positions 142 to 191 are disordered; sequence VNFSNNTNEDKKEEKKEVKEEKKEEKKEEKKEEKKDDKKDDKKDDKKDDK. Residues 149–191 are compositionally biased toward basic and acidic residues; that stretch reads NEDKKEEKKEVKEEKKEEKKEEKKEEKKDDKKDDKKDDKKDDK. A helical membrane pass occupies residues 215–236; that stretch reads TIIAAPVFYNWCMLICRACFDE. Over 237-246 the chain is Extracellular; it reads LQIDHIKLWL. A helical membrane pass occupies residues 247-267; sequence FLDYCSDIIYVFDMFVRFRTG. The Cytoplasmic portion of the chain corresponds to 268–292; the sequence is FLEQGLLVKDEKKLRDHYTQTVQFK. Residues 293–311 traverse the membrane as a helical segment; the sequence is LDVLSLLPTDLAYLKLGLN. Topologically, residues 312-316 are extracellular; that stretch reads YPELR. A helical transmembrane segment spans residues 317 to 335; that stretch reads FNRLLRIARLFEFFDRTET. The Cytoplasmic segment spans residues 336-342; the sequence is RTNYPNM. A helical transmembrane segment spans residues 343-366; sequence FRIGNLVLYILIIIHWNACIYFAI. At 367–389 the chain is on the extracellular side; sequence SKVIGFGTDSWVYPNVSIPEYGR. A run of 2 helical transmembrane segments spans residues 390 to 424 and 425 to 449; these read LSRKYIYSLYWSTLTLTTIGETPPPVKDEEYLFVV and IDFLVGVLIFATIVGNVGSMISNMN. The Cytoplasmic portion of the chain corresponds to 450–735; the sequence is ASRAEFQAKV…PEKPEEQKKD (286 aa). 3',5'-cyclic GMP is bound by residues 532-654, glutamate 591, and arginine 606; that span reads LLIE…DNLI. Residues 715–735 form a disordered region; sequence GSGSLSVGEPEPEKPEEQKKD. Positions 725 to 735 are enriched in basic and acidic residues; it reads EPEKPEEQKKD.

The protein belongs to the cyclic nucleotide-gated cation channel (TC 1.A.1.5) family.

Its subcellular location is the membrane. In terms of biological role, visual signal transduction is mediated by a G-protein coupled cascade using cGMP as second messenger. This protein can be activated by cyclic GMP which leads to an opening of the cation channel and thereby causing a depolarization of cone photoreceptors. The chain is Cyclic nucleotide-gated channel cone photoreceptor subunit alpha from Gallus gallus (Chicken).